We begin with the raw amino-acid sequence, 911 residues long: Protein translocase subunit SecA (911 aa).

ATP is bound by residues Gln-87, Gly-105–Thr-109, and Asp-499. Cys-895, Cys-897, Cys-906, and His-907 together coordinate Zn(2+).

The protein belongs to the SecA family. As to quaternary structure, monomer and homodimer. Part of the essential Sec protein translocation apparatus which comprises SecA, SecYEG and auxiliary proteins SecDF-YajC and YidC. Requires Zn(2+) as cofactor.

It localises to the cell inner membrane. The protein localises to the cytoplasm. The catalysed reaction is ATP + H2O + cellular proteinSide 1 = ADP + phosphate + cellular proteinSide 2.. Its function is as follows. Part of the Sec protein translocase complex. Interacts with the SecYEG preprotein conducting channel. Has a central role in coupling the hydrolysis of ATP to the transfer of proteins into and across the cell membrane, serving both as a receptor for the preprotein-SecB complex and as an ATP-driven molecular motor driving the stepwise translocation of polypeptide chains across the membrane. This chain is Protein translocase subunit SecA, found in Novosphingobium aromaticivorans (strain ATCC 700278 / DSM 12444 / CCUG 56034 / CIP 105152 / NBRC 16084 / F199).